Consider the following 377-residue polypeptide: Diels-Alderase fsa2 (377 aa).

The protein belongs to the Diels-Alderase family.

The enzyme catalyses (5S)-3-[(2E,6R,8E,10E,12E)-2,6-dimethyltetradeca-2,8,10,12-tetraenoyl]-5-(hydroxymethyl)pyrrolidine-2,4-dione = trichosetin. It functions in the pathway mycotoxin biosynthesis. Its function is as follows. Diels-Alderase; part of the gene cluster that mediates the biosynthesis of equisetin, a trans-fused decalin-containing tetramic acid with antimicrobial activity. The PKS module of eqxS together with the enoylreductase eqxC catalyze the formation of the polyketide unit which is then conjugated to L-serine by the condensation domain of the eqxS NRPS module. Activity of the Dieckmann cyclase domain (RED) results in release of the Dieckmann product intermediate. Diels-Alderase eqx3 is involved in endo-selective Diels-Alder cycloaddition to form the decalin ring, leading to the production of N-desmethylequisetin also called trichosetin. Subsequent N-methylation is carried out by eqxD to give equisetin. The sequence is that of Diels-Alderase fsa2 from Fusarium heterosporum.